A 209-amino-acid chain; its full sequence is Guanylate kinase (209 aa).

In terms of domain architecture, Guanylate kinase-like spans 7 to 185; the sequence is GNLYIVAAPS…AAMELQSIVI (179 aa). 14 to 21 serves as a coordination point for ATP; it reads APSGGGKT.

This sequence belongs to the guanylate kinase family.

It is found in the cytoplasm. It catalyses the reaction GMP + ATP = GDP + ADP. In terms of biological role, essential for recycling GMP and indirectly, cGMP. This chain is Guanylate kinase, found in Legionella pneumophila (strain Paris).